We begin with the raw amino-acid sequence, 194 residues long: Adenylate kinase (194 aa).

10–15 (GAGKGT) lines the ATP pocket. Residues 30–59 (STGDMLRAAVAQQSEIGKRAKAVMDAGQLV) are NMP. Residues Thr31, Arg36, 57 to 59 (QLV), 85 to 88 (GYPR), and Gln92 contribute to the AMP site. An LID region spans residues 126–142 (SRVAETIAKGGQVRSDD). Arg127 provides a ligand contact to ATP. 2 residues coordinate AMP: Arg139 and Arg150. Ala178 serves as a coordination point for ATP.

This sequence belongs to the adenylate kinase family. In terms of assembly, monomer.

Its subcellular location is the cytoplasm. The enzyme catalyses AMP + ATP = 2 ADP. It functions in the pathway purine metabolism; AMP biosynthesis via salvage pathway; AMP from ADP: step 1/1. In terms of biological role, catalyzes the reversible transfer of the terminal phosphate group between ATP and AMP. Plays an important role in cellular energy homeostasis and in adenine nucleotide metabolism. The protein is Adenylate kinase of Brucella anthropi (strain ATCC 49188 / DSM 6882 / CCUG 24695 / JCM 21032 / LMG 3331 / NBRC 15819 / NCTC 12168 / Alc 37) (Ochrobactrum anthropi).